Here is a 258-residue protein sequence, read N- to C-terminus: Imidazole glycerol phosphate synthase subunit HisF (258 aa).

Catalysis depends on residues Asp-11 and Asp-130.

It belongs to the HisA/HisF family. As to quaternary structure, heterodimer of HisH and HisF.

The protein localises to the cytoplasm. The enzyme catalyses 5-[(5-phospho-1-deoxy-D-ribulos-1-ylimino)methylamino]-1-(5-phospho-beta-D-ribosyl)imidazole-4-carboxamide + L-glutamine = D-erythro-1-(imidazol-4-yl)glycerol 3-phosphate + 5-amino-1-(5-phospho-beta-D-ribosyl)imidazole-4-carboxamide + L-glutamate + H(+). Its pathway is amino-acid biosynthesis; L-histidine biosynthesis; L-histidine from 5-phospho-alpha-D-ribose 1-diphosphate: step 5/9. IGPS catalyzes the conversion of PRFAR and glutamine to IGP, AICAR and glutamate. The HisF subunit catalyzes the cyclization activity that produces IGP and AICAR from PRFAR using the ammonia provided by the HisH subunit. This chain is Imidazole glycerol phosphate synthase subunit HisF, found in Sodalis glossinidius (strain morsitans).